The chain runs to 453 residues: RuvB-like helicase 1 (453 aa).

71-78 (GGPGTGKT) contacts ATP.

This sequence belongs to the RuvB family. In terms of assembly, may form heterododecamers with RVB2. Component of the SWR1 chromatin remodeling complex, the INO80 chromatin remodeling complex, and of the R2TP complex.

It is found in the nucleus. It carries out the reaction ATP + H2O = ADP + phosphate + H(+). DNA helicase which participates in several chromatin remodeling complexes, including the SWR1 and the INO80 complexes. The SWR1 complex mediates the ATP-dependent exchange of histone H2A for the H2A variant HZT1 leading to transcriptional regulation of selected genes by chromatin remodeling. The INO80 complex remodels chromatin by shifting nucleosomes and is involved in DNA repair. Also involved in pre-rRNA processing. This chain is RuvB-like helicase 1 (RVB1), found in Yarrowia lipolytica (strain CLIB 122 / E 150) (Yeast).